A 290-amino-acid polypeptide reads, in one-letter code: 4-hydroxybenzoate octaprenyltransferase (290 aa).

6 consecutive transmembrane segments (helical) span residues 41–61 (WPLV…GCAM), 89–109 (WEAV…ILPL), 133–153 (FFAI…PMAF), 158–178 (GTVP…SVAY), 202–224 (FGRF…YAWI), and 269–289 (WLGG…GAAG).

This sequence belongs to the UbiA prenyltransferase family. Requires Mg(2+) as cofactor.

The protein resides in the cell inner membrane. The catalysed reaction is all-trans-octaprenyl diphosphate + 4-hydroxybenzoate = 4-hydroxy-3-(all-trans-octaprenyl)benzoate + diphosphate. Its pathway is cofactor biosynthesis; ubiquinone biosynthesis. In terms of biological role, catalyzes the prenylation of para-hydroxybenzoate (PHB) with an all-trans polyprenyl group. Mediates the second step in the final reaction sequence of ubiquinone-8 (UQ-8) biosynthesis, which is the condensation of the polyisoprenoid side chain with PHB, generating the first membrane-bound Q intermediate 3-octaprenyl-4-hydroxybenzoate. This is 4-hydroxybenzoate octaprenyltransferase from Burkholderia vietnamiensis (strain G4 / LMG 22486) (Burkholderia cepacia (strain R1808)).